Here is a 305-residue protein sequence, read N- to C-terminus: Protoheme IX farnesyltransferase (305 aa).

Helical transmembrane passes span Val-28 to Val-48, Val-52 to His-72, Ile-102 to Leu-122, Thr-123 to Lys-143, Ile-150 to Gly-170, Ala-176 to Ile-196, Ile-221 to Met-241, Ser-243 to Ile-263, and Ile-282 to Leu-302.

The protein belongs to the UbiA prenyltransferase family. Protoheme IX farnesyltransferase subfamily.

The protein localises to the cell inner membrane. It catalyses the reaction heme b + (2E,6E)-farnesyl diphosphate + H2O = Fe(II)-heme o + diphosphate. It participates in porphyrin-containing compound metabolism; heme O biosynthesis; heme O from protoheme: step 1/1. Its function is as follows. Converts heme B (protoheme IX) to heme O by substitution of the vinyl group on carbon 2 of heme B porphyrin ring with a hydroxyethyl farnesyl side group. This chain is Protoheme IX farnesyltransferase, found in Coxiella burnetii (strain CbuK_Q154) (Coxiella burnetii (strain Q154)).